Reading from the N-terminus, the 467-residue chain is MTSELWHQCLGYLEDELPAQQFNTWLRPLQAKGSEEELLLFAPNRFVLDWVNEKYIGRINEILSELTSQKAPRISLKIGSITGNSKGQQASKDSAVGATRTTAPSRPVIADVAPSGERNVTVEGAIKHESYLNPTFTFETFVEGKSNQLARAAAMQVADNPGSAYNPLFLYGGVGLGKTHLMQAVGNAIFKKNPNAKILYLHSERFVADMVKALQLNAFNEFKRLYRSVDALLIDDIQFFARKERSQEEFFHTFNALLEGGQQMILTCDRYPKEIDHMEERLKSRFGWGLTVMVEPPELETRVAILMKKAEQANVHLSSESAFFIAQKIRSNVRELEGALKLVIANAHFTGQEITPAFIRECLKDLLALHEKQVSIDNIQRTVAEYYKIRIADILSKRRTRSITRPRQMAMALAKELTNHSLPEIGEAFGGRDHTTVLHACKVMIELQQSDPTLRDDYQNFMRMLTS.

The segment at 1-80 (MTSELWHQCL…APRISLKIGS (80 aa)) is domain I, interacts with DnaA modulators. The segment at 80–130 (SITGNSKGQQASKDSAVGATRTTAPSRPVIADVAPSGERNVTVEGAIKHES) is domain II. Positions 131 to 347 (YLNPTFTFET…GALKLVIANA (217 aa)) are domain III, AAA+ region. Positions 175, 177, 178, and 179 each coordinate ATP. The domain IV, binds dsDNA stretch occupies residues 348–467 (HFTGQEITPA…YQNFMRMLTS (120 aa)).

Belongs to the DnaA family. Oligomerizes as a right-handed, spiral filament on DNA at oriC.

The protein resides in the cytoplasm. Plays an essential role in the initiation and regulation of chromosomal replication. ATP-DnaA binds to the origin of replication (oriC) to initiate formation of the DNA replication initiation complex once per cell cycle. Binds the DnaA box (a 9 base pair repeat at the origin) and separates the double-stranded (ds)DNA. Forms a right-handed helical filament on oriC DNA; dsDNA binds to the exterior of the filament while single-stranded (ss)DNA is stabiized in the filament's interior. The ATP-DnaA-oriC complex binds and stabilizes one strand of the AT-rich DNA unwinding element (DUE), permitting loading of DNA polymerase. After initiation quickly degrades to an ADP-DnaA complex that is not apt for DNA replication. Binds acidic phospholipids. The sequence is that of Chromosomal replication initiator protein DnaA from Hahella chejuensis (strain KCTC 2396).